Consider the following 694-residue polypeptide: MPEETQTQDQPMEEEEVETFAFQAEIAQLMSLIINTFYSNKEIFLRELISNSSDALDKIRYESLTDPSKLDSGKELHINLIPNKQDRTLTIVDTGIGMTKADLINNLGTIAKSGTKAFMEALQAGADISMIGQFGVGFYSAYLVAEKVTVITKHNDDEQYAWESSAGGSFTVRTDAGEPMGRGTKVVLHLKEDQTEYLEERRIKEIVKKHSQFIGYPITLFVEKERDKEVSDDEAKQPDDKPEIEDVGSDEEEEEKKDGDIDQEELNKTKPIWTRNPDDITNEEYGEFYKSLTNDWEDHLAVKHFSVEGQLEFRALLFVPRRAPFDLFENRKKKNNIKLYVRRVFIMDNCEELIPEYLNFIRGVVDSEDLPLNISREMLQQSKILKVIRKNLVKKCLELFTELAEDKENYKKFYEQFSKNIKLGIHEDSQNRKKLSELLRYYTSASGDEMVSLKDYCTRMKENQKHIYYITGETKDQVANSAFVERLRKHGLEVIYMIEPIDEYCVQQLKEFEGKTLVSVTKEGLELTKFENLCKIMKDILEKKVEKVVVSNRLVTSPCCIVTSTYGWTANMERIMKAQALRDNSTMGYMAAKKHLEVNPDHSIIETLRQKAEADKNDKSVKDLVILLYETALLSSGFSLEDPQTHANRIYRMIKLGLGIDEDDPTADDTAAAVTEEMPPLEGDDDTSRMEEVD.

A phosphothreonine; by PRKDC mark is found at T5 and T7. The interval D9–K236 is interaction with NR3C1. Position 51 (N51) interacts with ATP. Residues K58 and K84 each carry the N6-acetyllysine modification. The ATP site is built by D93, K112, and F138. Basic and acidic residues predominate over residues K228–K241. The disordered stretch occupies residues K228–R275. Phosphoserine occurs at positions 231 and 249. Residues P242–E255 are compositionally biased toward acidic residues. The span at K256 to K268 shows a compositional bias: basic and acidic residues. The tract at residues D258–A578 is interaction with NR3C1. Residues I261–R582 are interaction with FNIP2 and TSC1. Residues I261–D694 form an interaction with FLCN and FNIP1 region. The residue at position 289 (Y289) is a Phosphotyrosine. R376 is a binding site for ATP. K419 is subject to N6-acetyllysine. S429 is subject to Phosphoserine. At K434 the chain carries N6-acetyllysine. Position 452 is a phosphoserine (S452). An N6-acetyllysine modification is found at K465. Y468 carries the phosphotyrosine modification. Position 547 is an N6-acetyllysine (K547). C560 carries the post-translational modification S-nitrosocysteine. Residues M590–V693 are interaction with NR1D1. Position 603 is a phosphoserine (S603). The required for homodimerization stretch occupies residues Q644–D694. Residues E662–D694 are disordered. Low complexity predominate over residues D668–E677. The TPR repeat-binding motif lies at D685–D694. Residues M690 to D694 form an essential for interaction with SMYD3, TSC1 and STIP1/HOP region. Residues E691 to D694 are essential for interaction with SGTA and TTC1.

It belongs to the heat shock protein 90 family. As to quaternary structure, homodimer. Identified in NR3C1/GCR steroid receptor-chaperone complexes formed at least by NR3C1, HSP90AA1 and a variety of proteins containing TPR repeats such as FKBP4, FKBP5, PPID, PPP5C or STIP1. Forms a complex containing HSP90AA1, TSC1 and TSC2; TSC1 is required to recruit TCS2 to the complex. The closed form interacts (via the middle domain and TPR repeat-binding motif) with co-chaperone TSC1 (via C-terminus). Interacts with TOM34. Interacts with TERT; the interaction, together with PTGES3, is required for correct assembly and stabilization of the TERT holoenzyme complex. Interacts with CHORDC1 and DNAJC7. Interacts with STUB1 and UBE2N; may couple the chaperone and ubiquitination systems. Interacts (via TPR repeat-binding motif) with PPP5C (via TPR repeats); the interaction is direct and activates PPP5C phosphatase activity. Following LPS binding, may form a complex with CXCR4, GDF5 and HSPA8. Interacts with KSR1. Interacts with co-chaperone CDC37 (via C-terminus); the interaction inhibits HSP90AA1 ATPase activity. May interact with NWD1. Interacts with FNIP1 and FNIP2; the interaction inhibits HSP90AA1 ATPase activity. Interacts with co-chaperone AHSA1 (phosphorylated on 'Tyr-223'); the interaction activates HSP90AA1 ATPase activity and results in the dissociation of TSC1 from HSP90AA1. Interacts with FLCN in the presence of FNIP1. Interacts with HSP70, STIP1 and PTGES3. Interacts with SMYD3; this interaction enhances SMYD3 histone-lysine N-methyltransferase. Interacts with SGTA (via TPR repeats). Interacts with TTC1 (via TPR repeats). Interacts with HSF1 in an ATP-dependent manner. Interacts with MET; the interaction suppresses MET kinase activity. Interacts with ERBB2 in an ATP-dependent manner; the interaction suppresses ERBB2 kinase activity. Interacts with HIF1A, KEAP1 and RHOBTB2. Interacts with HSF1; this interaction is decreased in a IER5-dependent manner, promoting HSF1 accumulation in the nucleus, homotrimerization and DNA-binding activities. Interacts with STUB1 and SMAD3. Interacts with HSP90AB1; interaction is constitutive. Interacts with HECTD1 (via N-terminus). Interacts with NR3C1 (via domain NR LBD) and NR1D1 (via domain NR LBD). Interacts with NLPR12. Interacts with PDCL3. Interacts with TOMM70; the interaction is required for preprotein mitochondrial import. Interacts with TOMM70, IRF3 and TBK1; the interactions are direct and mediate the association of TOMM70 with IRF3 and TBK1. Forms a complex with ASL, ASS1 and NOS2; the complex regulates cell-autonomous L-arginine synthesis and citrulline recycling while channeling extracellular L-arginine to nitric oxide synthesis pathway. ISGylated. Post-translationally, S-nitrosylated; negatively regulates the ATPase activity and the activation of eNOS by HSP90AA1. In terms of processing, ubiquitinated via 'Lys-63'-linked polyubiquitination by HECTD1. Ubiquitination promotes translocation into the cytoplasm away from the membrane and secretory pathways.

It is found in the nucleus. The protein resides in the cytoplasm. It localises to the melanosome. The protein localises to the cell membrane. Its subcellular location is the mitochondrion. It catalyses the reaction ATP + H2O = ADP + phosphate + H(+). Its activity is regulated as follows. In the resting state, through the dimerization of its C-terminal domain, HSP90 forms a homodimer which is defined as the open conformation. Upon ATP-binding, the N-terminal domain undergoes significant conformational changes and comes in contact to form an active closed conformation. After HSP90 finishes its chaperoning tasks of assisting the proper folding, stabilization and activation of client proteins under the active state, ATP molecule is hydrolyzed to ADP which then dissociates from HSP90 and directs the protein back to the resting state. Co-chaperone TSC1 promotes ATP binding and inhibits HSP90AA1 ATPase activity. Binding to phosphorylated AHSA1 promotes HSP90AA1 ATPase activity. Inhibited by geldanamycin, Ganetespib (STA-9090) and SNX-2112. Functionally, molecular chaperone that promotes the maturation, structural maintenance and proper regulation of specific target proteins involved for instance in cell cycle control and signal transduction. Undergoes a functional cycle that is linked to its ATPase activity which is essential for its chaperone activity. This cycle probably induces conformational changes in the client proteins, thereby causing their activation. Interacts dynamically with various co-chaperones that modulate its substrate recognition, ATPase cycle and chaperone function. Engages with a range of client protein classes via its interaction with various co-chaperone proteins or complexes, that act as adapters, simultaneously able to interact with the specific client and the central chaperone itself. Recruitment of ATP and co-chaperone followed by client protein forms a functional chaperone. After the completion of the chaperoning process, properly folded client protein and co-chaperone leave HSP90 in an ADP-bound partially open conformation and finally, ADP is released from HSP90 which acquires an open conformation for the next cycle. Plays a critical role in mitochondrial import, delivers preproteins to the mitochondrial import receptor TOMM70. Apart from its chaperone activity, it also plays a role in the regulation of the transcription machinery. HSP90 and its co-chaperones modulate transcription at least at three different levels. In the first place, they alter the steady-state levels of certain transcription factors in response to various physiological cues. Second, they modulate the activity of certain epigenetic modifiers, such as histone deacetylases or DNA methyl transferases, and thereby respond to the change in the environment. Third, they participate in the eviction of histones from the promoter region of certain genes and thereby turn on gene expression. Binds bacterial lipopolysaccharide (LPS) and mediates LPS-induced inflammatory response, including TNF secretion by monocytes. Antagonizes STUB1-mediated inhibition of TGF-beta signaling via inhibition of STUB1-mediated SMAD3 ubiquitination and degradation. Mediates the association of TOMM70 with IRF3 or TBK1 in mitochondrial outer membrane which promotes host antiviral response. The chain is Heat shock protein HSP 90-alpha (HSP90AA1) from Oryctolagus cuniculus (Rabbit).